Here is a 162-residue protein sequence, read N- to C-terminus: Cyclic pyranopterin monophosphate synthase (162 aa).

Substrate is bound by residues 75–77 (LCH) and 113–114 (ME). Aspartate 128 is a catalytic residue.

It belongs to the MoaC family. In terms of assembly, homohexamer; trimer of dimers.

It catalyses the reaction (8S)-3',8-cyclo-7,8-dihydroguanosine 5'-triphosphate = cyclic pyranopterin phosphate + diphosphate. It functions in the pathway cofactor biosynthesis; molybdopterin biosynthesis. Functionally, catalyzes the conversion of (8S)-3',8-cyclo-7,8-dihydroguanosine 5'-triphosphate to cyclic pyranopterin monophosphate (cPMP). This chain is Cyclic pyranopterin monophosphate synthase, found in Klebsiella pneumoniae (strain 342).